We begin with the raw amino-acid sequence, 819 residues long: FYN-binding protein 1 (819 aa).

Residues 1–45 (MAKFNTGSNPTEEAATSSRPFKVAGQSSPSGIQSRKNLFDNQGNA) are compositionally biased toward polar residues. Residues 1 to 490 (MAKFNTGSNP…REKKEQELKK (490 aa)) form a disordered region. Residue Lys3 is modified to N6-acetyllysine. A phosphoserine mark is found at Ser28 and Ser46. A compositionally biased stretch (basic and acidic residues) spans 69–79 (TYEEKPEKEPK). Pro residues predominate over residues 150-160 (GPKPGPAPPVP). Residue Ser222 is modified to Phosphoserine. Basic and acidic residues-rich tracts occupy residues 237-248 (PPKEDPEDKDHG) and 273-285 (NFEE…KTDL). At Ser318 the chain carries Phosphoserine. 2 stretches are compositionally biased toward pro residues: residues 342 to 351 (GPPPPKPNRP) and 380 to 412 (LPPP…PRNI). Residues 439 to 453 (LEEEQESEGETYEDI) show a composition bias toward acidic residues. At Ser445 the chain carries Phosphoserine. A coiled-coil region spans residues 448 to 495 (ETYEDIDSSKERDKKREKEEKKRLELERKEQKEREKKEQELKKKFKLT). Basic and acidic residues predominate over residues 454–489 (DSSKERDKKREKEEKKRLELERKEQKEREKKEQELK). Residues 479 to 493 (KEREKKEQELKKKFK) carry the Nuclear localization signal motif. Residues 499–560 (QVIHHAKACC…KTTAVEIDYD (62 aa)) enclose the SH3 1 domain. Tyr559 carries the post-translational modification Phosphotyrosine. A phosphoserine mark is found at Ser561 and Ser568. An SH2-binding; to LCP2 motif is present at residues 584–587 (YDDV). Disordered stretches follow at residues 589–635 (EQDA…DEKT) and 649–728 (KDDR…EKEE). Acidic residues predominate over residues 610-626 (TDDEIYDGIEEEDDDDG). Residues 615–618 (YDGI) carry the SH2-binding; to FYN motif. Basic and acidic residues predominate over residues 649–664 (KDDRKKSIREKPKVSE). A compositionally biased stretch (polar residues) spans 668 to 677 (NEGSSLPSQH). Over residues 682-692 (VGEEVYDDVDA) the composition is skewed to acidic residues. A Phosphotyrosine modification is found at Tyr687. A Nuclear localization signal motif is present at residues 710–736 (RAKTEEKDPKKLKKQEKEEKDLRKKFK). Basic and acidic residues predominate over residues 711 to 728 (AKTEEKDPKKLKKQEKEE). In terms of domain architecture, SH3 2 spans 736 to 804 (KYDGEIRVLY…LRSYLVDNDG (69 aa)).

In terms of assembly, part of a complex consisting of SKAP2, FYB1 and PTPNS1. Part of a complex consisting of SKAP2, FYB1 and PIRB. Part of a complex consisting of SKAP1, FYB1 and CLNK. Interacts with CLNK (via its SH2 domain); this interaction allows SKAP1 and FYB1 to recruit FYN to the complex, thus promoting the phosphorylation of CLNK by FYN. Interacts with FYN. Interacts with LCP2. Interacts with SKAP1. Interacts with SKAP2. Interacts with FASLG. Interacts with EVL. Interacts with TMEM47. Interacts with LCK. T-cell receptor ligation leads to increased tyrosine phosphorylation. As to expression, expressed in hematopoietic tissues such as myeloid and T-cells, spleen and thymus. Not expressed in B-cells, nor in non-lymphoid tissues. FYB-130 is preferentially expressed in mature T-cells compared to FYB-120, whereas thymocytes showed a greater relative amount of FYB-120. Expressed in podocytes.

Its subcellular location is the cytoplasm. It localises to the nucleus. It is found in the cell junction. In terms of biological role, acts as an adapter protein of the FYN and LCP2 signaling cascades in T-cells. May play a role in linking T-cell signaling to remodeling of the actin cytoskeleton. Modulates the expression of IL2. Involved in platelet activation. Prevents the degradation of SKAP1 and SKAP2. May be involved in high affinity immunoglobulin epsilon receptor signaling in mast cells. The protein is FYN-binding protein 1 (Fyb1) of Mus musculus (Mouse).